The sequence spans 90 residues: Small ribosomal subunit protein bS16 (90 aa).

The protein belongs to the bacterial ribosomal protein bS16 family.

This Lysinibacillus sphaericus (strain C3-41) protein is Small ribosomal subunit protein bS16.